A 299-amino-acid polypeptide reads, in one-letter code: Ribosomal RNA small subunit methyltransferase A (299 aa).

The S-adenosyl-L-methionine site is built by asparagine 44, valine 46, glycine 71, glutamate 92, aspartate 122, and asparagine 141.

The protein belongs to the class I-like SAM-binding methyltransferase superfamily. rRNA adenine N(6)-methyltransferase family. RsmA subfamily.

The protein resides in the cytoplasm. The enzyme catalyses adenosine(1518)/adenosine(1519) in 16S rRNA + 4 S-adenosyl-L-methionine = N(6)-dimethyladenosine(1518)/N(6)-dimethyladenosine(1519) in 16S rRNA + 4 S-adenosyl-L-homocysteine + 4 H(+). Functionally, specifically dimethylates two adjacent adenosines (A1518 and A1519) in the loop of a conserved hairpin near the 3'-end of 16S rRNA in the 30S particle. May play a critical role in biogenesis of 30S subunits. The sequence is that of Ribosomal RNA small subunit methyltransferase A from Rhodococcus erythropolis (strain PR4 / NBRC 100887).